Reading from the N-terminus, the 334-residue chain is AT-hook motif nuclear-localized protein 2 (334 aa).

Positions 1-21 are enriched in low complexity; that stretch reads METTGEVVKTTTGSDGGVTVV. Disordered stretches follow at residues 1–103 and 109–128; these read METT…PTTS and STTS…PSSF. Over residues 44 to 54 the composition is skewed to pro residues; sequence SVAPPPPPPPQ. The segment covering 71–80 has biased composition (basic residues); it reads IKKRRGRPRK. The Bipartite nuclear localization signal motif lies at 72-80; sequence KKRRGRPRK. A DNA-binding region (a.T hook) is located at residues 72-84; it reads KKRRGRPRKYGHD. Residues 90-103 are compositionally biased toward polar residues; the sequence is LSPNPISSAAPTTS. Residues 147 to 287 form the PPC domain; it reads AANFTPHIIT…PHNHNFMSSP (141 aa). A compositionally biased stretch (polar residues) spans 306–319; sequence SSLPISTWTPSFPS. A disordered region spans residues 306–334; it reads SSLPISTWTPSFPSDSRHKHSHDFNITLT.

The protein resides in the nucleus. Functionally, transcription factor that specifically binds AT-rich DNA sequences related to the nuclear matrix attachment regions (MARs). The chain is AT-hook motif nuclear-localized protein 2 from Arabidopsis thaliana (Mouse-ear cress).